Reading from the N-terminus, the 342-residue chain is MKMEEFSPPTSPNNHVIVQANPQIAAALSTNSPMQQGIPPQGHQNPNEQQQQQQFVGQPPMGGMGGPMRMQMPQQQIRQMPYPSPQMRAGPPPPQQQQQQHFQQMGIPQQQQPQQFTPNGQSMQMQQRPMQMGMAQGPGPSGHLMGMVGGPPPQHMMQQQGGGGPPQFVPNSSPMPLPPQQIMQVQHQQQHQQPPPSQQIQQPPIPQPQQQQAPPPQMIPAAVPYGSIMEKSKLDDLMQQISSTTVLEENVKDVLVEYADDFVSSLIDKACKMIKNREVKKIESRDIEFILKNVYNMPVVPRAASHNFGSQTEVIDLSKEKFVPTEAHKQRVALLKKQIKKL.

The tract at residues 1–221 (MKMEEFSPPT…QAPPPQMIPA (221 aa)) is disordered. The span at 12–35 (PNNHVIVQANPQIAAALSTNSPMQ) shows a compositional bias: polar residues. 4 stretches are compositionally biased toward low complexity: residues 39 to 59 (PPQGHQNPNEQQQQQQFVGQP), 67 to 89 (PMRMQMPQQQIRQMPYPSPQMRA), 96 to 146 (QQQQ…HLMG), and 180 to 192 (QQIMQVQHQQQHQ). Residues 193–218 (QPPPSQQIQQPPIPQPQQQQAPPPQM) show a composition bias toward pro residues. A Histone-fold domain is found at 230-297 (EKSKLDDLMQ…EFILKNVYNM (68 aa)).

The protein belongs to the TAF12 family. In terms of assembly, interacts (via histone-fold domain) with taf-4 (via the histone-fold domain). Interaction may facilitate the nuclear localization of taf-4.

It localises to the nucleus. In terms of biological role, part of the general transcription factor complex TFIID. Plays a role in recruiting taf-4 to the nucleus and thereby activating transcription initiation by RNA polymerase II, as part of the TFIID complex. This chain is Transcription initiation factor TFIID subunit 12, found in Caenorhabditis elegans.